Reading from the N-terminus, the 414-residue chain is Autophagy-related protein 18 (414 aa).

4 WD repeats span residues 1-36 (MAMNFVTFNQDYSYLAVATSKGFRIFTTDPFAKSYE), 69-114 (KRQS…LLYT), 185-225 (AHRS…KLYQ), and 230-269 (SIPSRIYSMSFNTTSTLLCVSSSTETIHLFKLSHQTSSRE). The short motif at 226 to 230 (FRRGS) is the L/FRRG motif element. Residues 261–314 (LSHQTSSREGSPSSALSRERAASQSSLGTSPDPDDPTDDMESSEIASRKHNGTL) are disordered. The span at 262 to 289 (SHQTSSREGSPSSALSRERAASQSSLGT) shows a compositional bias: polar residues. Over residues 292-302 (DPDDPTDDMES) the composition is skewed to acidic residues. WD repeat units follow at residues 309–355 (KHNG…AWIK) and 367–407 (GNAG…GGEG).

It belongs to the WD repeat PROPPIN family. In terms of assembly, component of the PI(3,5)P2 regulatory complex.

It is found in the preautophagosomal structure membrane. The protein localises to the vacuole membrane. It localises to the endosome membrane. Its function is as follows. The PI(3,5)P2 regulatory complex regulates both the synthesis and turnover of phosphatidylinositol 3,5-bisphosphate (PtdIns(3,5)P2). Necessary for proper vacuole morphology. Plays an important role in osmotically-induced vacuole fragmentation. Required for cytoplasm to vacuole transport (Cvt) vesicle formation, pexophagy and starvation-induced autophagy. Involved in correct atg9 trafficking to the pre-autophagosomal structure. Might also be involved in premeiotic DNA replication. The chain is Autophagy-related protein 18 (atg18) from Aspergillus terreus (strain NIH 2624 / FGSC A1156).